The sequence spans 460 residues: Jacalin-related lectin 36 (460 aa).

Positions 1–131 (MAAATMSWDD…LNSIDVHFAP (131 aa)) constitute a Jacalin-type lectin 1 domain. Ala2 carries the post-translational modification N-acetylalanine. Disordered stretches follow at residues 34 to 57 (YDGDTHNPHHHGTPGKKSDGVSLS), 133 to 162 (PSSSSSSSSLSQANKVDAQGGKGGTSWDDG), and 291 to 334 (SGRG…PHEG). Over residues 133 to 143 (PSSSSSSSSLS) the composition is skewed to low complexity. Residues 145–289 (ANKVDAQGGK…LNALGAYFAP (145 aa)) enclose the Jacalin-type lectin 2 domain. Polar residues predominate over residues 292-309 (GRGTPSATQPPGSAQPTG). The Jacalin-type lectin 3 domain occupies 313 to 457 (AKKLEAKGGN…IHQVGVHVKP (145 aa)).

The protein belongs to the jacalin lectin family.

The chain is Jacalin-related lectin 36 (JAL36) from Arabidopsis thaliana (Mouse-ear cress).